The following is a 443-amino-acid chain: Amino-acid acetyltransferase (443 aa).

Residues 296–443 enclose the N-acetyltransferase domain; the sequence is EQIRRATIND…RSKVLMADLG (148 aa).

The protein belongs to the acetyltransferase family. ArgA subfamily. Homohexamer.

It is found in the cytoplasm. The catalysed reaction is L-glutamate + acetyl-CoA = N-acetyl-L-glutamate + CoA + H(+). It functions in the pathway amino-acid biosynthesis; L-arginine biosynthesis; N(2)-acetyl-L-ornithine from L-glutamate: step 1/4. This chain is Amino-acid acetyltransferase (argA), found in Salmonella typhi.